The chain runs to 446 residues: MFENDTIVAIATANGIGSISIVRVSGAKALEIATKISKKNNFKARLATLSTIYDSKNEIIDEALVIYFKSPFSFTGEDVVEFQCHGGVAISNMIVDEVLNAGARLANPGEFSKRAFFNNKIDLTKAEAISKIIEARSADAVKLLARQLKGELTNFVDEIREDLLFMLAYTEVSIDYAEEDLPTDIYEQIENKMQKISLKLSNTLEASRRREGMIEGFKVAIIGKPNVGKSSLLNKLLNFDRAIISDIAGTTRDTIEESVRIGTHIIKIVDTAGIRDASDVIEKIGIEKSIQAINEADIVIALFDNSKICDDEDKKILDLIKENSDKKVIVVLNKSDLQNQFDKNVLDSFIELSTKEDINPLIKELELILDSNTFGDDITLVSKRQVLAVENTLYNIGLAKEPLKSGELEFFAHFITQALEDISSITRPYDNDEMLDVMFGEFCLGK.

Positions 23, 81, and 120 each coordinate (6S)-5-formyl-5,6,7,8-tetrahydrofolate. The 155-residue stretch at 216 to 370 (GFKVAIIGKP…LIKELELILD (155 aa)) folds into the TrmE-type G domain. N226 serves as a coordination point for K(+). GTP contacts are provided by residues 226–231 (NVGKSS), 245–251 (SDIAGTT), and 270–273 (DTAG). S230 contributes to the Mg(2+) binding site. Residues S245, I247, and T250 each contribute to the K(+) site. T251 is a Mg(2+) binding site. K446 is a binding site for (6S)-5-formyl-5,6,7,8-tetrahydrofolate.

This sequence belongs to the TRAFAC class TrmE-Era-EngA-EngB-Septin-like GTPase superfamily. TrmE GTPase family. As to quaternary structure, homodimer. Heterotetramer of two MnmE and two MnmG subunits. It depends on K(+) as a cofactor.

It is found in the cytoplasm. In terms of biological role, exhibits a very high intrinsic GTPase hydrolysis rate. Involved in the addition of a carboxymethylaminomethyl (cmnm) group at the wobble position (U34) of certain tRNAs, forming tRNA-cmnm(5)s(2)U34. The protein is tRNA modification GTPase MnmE of Aliarcobacter butzleri (strain RM4018) (Arcobacter butzleri).